The sequence spans 182 residues: MLRFNLIVAVCENFGIGIRGDLPWRIKSELKYFSRTTKRTSDPTKQNAVVMGRKTYFGVPESKRPLPDRLNIVLSTTLQESDLPKGVLLCPNLETAMKILEEQNEVENIWIVGGSGVYEEAMASPRCHRLYITKIMQKFDCDTFFPAIPDSFREVAPDSDMPLGVQEENGIKFEYKILEKHS.

One can recognise a DHFR domain in the interval 3 to 180 (RFNLIVAVCE…IKFEYKILEK (178 aa)). NADP(+)-binding positions include A9 and 15–21 (GIGIRGD). Residue 29–34 (ELKYFS) coordinates substrate. Residue 53–55 (RKT) participates in NADP(+) binding. Residue R69 coordinates substrate. Residues 75 to 77 (STT) and 113 to 120 (GGSGVYEE) each bind NADP(+).

Belongs to the dihydrofolate reductase family. In terms of assembly, monomer. Interacts with vg.

It carries out the reaction (6S)-5,6,7,8-tetrahydrofolate + NADP(+) = 7,8-dihydrofolate + NADPH + H(+). The protein operates within cofactor biosynthesis; tetrahydrofolate biosynthesis; 5,6,7,8-tetrahydrofolate from 7,8-dihydrofolate: step 1/1. Its function is as follows. By interacting with vestigial (vg), may control genes involved in DNA replication. In terms of biological role, key enzyme in folate metabolism. Catalyzes an essential reaction for de novo glycine and purine synthesis, and for DNA precursor synthesis. This Drosophila melanogaster (Fruit fly) protein is Dihydrofolate reductase (Dhfr).